A 399-amino-acid chain; its full sequence is Chorismate synthase (399 aa).

NADP(+) is bound by residues arginine 40 and arginine 46. FMN-binding positions include 134–136 (RAS), 255–256 (QA), glycine 299, 314–318 (KPIST), and arginine 340.

It belongs to the chorismate synthase family. As to quaternary structure, homotetramer. The cofactor is FMNH2.

The catalysed reaction is 5-O-(1-carboxyvinyl)-3-phosphoshikimate = chorismate + phosphate. It participates in metabolic intermediate biosynthesis; chorismate biosynthesis; chorismate from D-erythrose 4-phosphate and phosphoenolpyruvate: step 7/7. Its function is as follows. Catalyzes the anti-1,4-elimination of the C-3 phosphate and the C-6 proR hydrogen from 5-enolpyruvylshikimate-3-phosphate (EPSP) to yield chorismate, which is the branch point compound that serves as the starting substrate for the three terminal pathways of aromatic amino acid biosynthesis. This reaction introduces a second double bond into the aromatic ring system. The chain is Chorismate synthase from Mycolicibacterium smegmatis (strain ATCC 700084 / mc(2)155) (Mycobacterium smegmatis).